The chain runs to 606 residues: Chaperone protein DnaK (606 aa).

Residue Thr-174 is modified to Phosphothreonine; by autocatalysis. The tract at residues 578 to 606 (YTQAGPQGGTNPGGQGGTDGNVNTDYKVY) is disordered. Residues 583–596 (PQGGTNPGGQGGTD) show a composition bias toward gly residues.

This sequence belongs to the heat shock protein 70 family.

In terms of biological role, acts as a chaperone. The chain is Chaperone protein DnaK from Caldicellulosiruptor saccharolyticus (strain ATCC 43494 / DSM 8903 / Tp8T 6331).